The following is a 151-amino-acid chain: 3-hydroxyacyl-[acyl-carrier-protein] dehydratase FabZ (151 aa).

The active site involves histidine 56.

This sequence belongs to the thioester dehydratase family. FabZ subfamily.

Its subcellular location is the cytoplasm. The catalysed reaction is a (3R)-hydroxyacyl-[ACP] = a (2E)-enoyl-[ACP] + H2O. In terms of biological role, involved in unsaturated fatty acids biosynthesis. Catalyzes the dehydration of short chain beta-hydroxyacyl-ACPs and long chain saturated and unsaturated beta-hydroxyacyl-ACPs. This Rhodopseudomonas palustris (strain HaA2) protein is 3-hydroxyacyl-[acyl-carrier-protein] dehydratase FabZ.